The chain runs to 180 residues: p-cumate 2,3-dioxygenase system, small oxygenase component (180 aa).

This sequence belongs to the bacterial ring-hydroxylating dioxygenase beta subunit family. The p-cumate 2,3-dioxygenase multicomponent enzyme system is composed of an electron transfer component and a dioxygenase component (iron sulfur protein (ISP)). The electron transfer component is composed of a ferredoxin reductase (CmtAa) and a ferredoxin (CmtAd), and the dioxygenase component is formed of a large alpha subunit (CmtAb) and a small beta subunit (CmtAc).

It participates in aromatic compound metabolism; p-cumate degradation; acetaldehyde and pyruvate from p-cumate. Its function is as follows. Component of the p-cumate 2,3-dioxygenase multicomponent enzyme system which catalyzes the incorporation of both atoms of molecular oxygen into p-cumate to form cis-2,3-dihydroxy-2,3-dihydro-p-cumate. The beta subunit seems to have a structural role in the holoenzyme. Also able to catalyze the cis-dihydroxylation of indole-2-carboxylate and indole-3-carboxylate. The sequence is that of p-cumate 2,3-dioxygenase system, small oxygenase component from Pseudomonas putida (Arthrobacter siderocapsulatus).